Here is a 372-residue protein sequence, read N- to C-terminus: Histidinol-phosphate aminotransferase (372 aa).

The residue at position 229 (Lys229) is an N6-(pyridoxal phosphate)lysine.

It belongs to the class-II pyridoxal-phosphate-dependent aminotransferase family. Histidinol-phosphate aminotransferase subfamily. Homodimer. It depends on pyridoxal 5'-phosphate as a cofactor.

It catalyses the reaction L-histidinol phosphate + 2-oxoglutarate = 3-(imidazol-4-yl)-2-oxopropyl phosphate + L-glutamate. It functions in the pathway amino-acid biosynthesis; L-histidine biosynthesis; L-histidine from 5-phospho-alpha-D-ribose 1-diphosphate: step 7/9. This is Histidinol-phosphate aminotransferase from Bdellovibrio bacteriovorus (strain ATCC 15356 / DSM 50701 / NCIMB 9529 / HD100).